Here is a 183-residue protein sequence, read N- to C-terminus: ATP synthase subunit delta (183 aa).

The protein belongs to the ATPase delta chain family. As to quaternary structure, F-type ATPases have 2 components, F(1) - the catalytic core - and F(0) - the membrane proton channel. F(1) has five subunits: alpha(3), beta(3), gamma(1), delta(1), epsilon(1). F(0) has three main subunits: a(1), b(2) and c(10-14). The alpha and beta chains form an alternating ring which encloses part of the gamma chain. F(1) is attached to F(0) by a central stalk formed by the gamma and epsilon chains, while a peripheral stalk is formed by the delta and b chains.

The protein resides in the cell inner membrane. F(1)F(0) ATP synthase produces ATP from ADP in the presence of a proton or sodium gradient. F-type ATPases consist of two structural domains, F(1) containing the extramembraneous catalytic core and F(0) containing the membrane proton channel, linked together by a central stalk and a peripheral stalk. During catalysis, ATP synthesis in the catalytic domain of F(1) is coupled via a rotary mechanism of the central stalk subunits to proton translocation. Functionally, this protein is part of the stalk that links CF(0) to CF(1). It either transmits conformational changes from CF(0) to CF(1) or is implicated in proton conduction. This Verminephrobacter eiseniae (strain EF01-2) protein is ATP synthase subunit delta.